Here is a 492-residue protein sequence, read N- to C-terminus: Glutamyl-tRNA(Gln) amidotransferase subunit A (492 aa).

Active-site charge relay system residues include Lys84 and Ser159. Ser183 (acyl-ester intermediate) is an active-site residue.

The protein belongs to the amidase family. GatA subfamily. As to quaternary structure, heterotrimer of A, B and C subunits.

The enzyme catalyses L-glutamyl-tRNA(Gln) + L-glutamine + ATP + H2O = L-glutaminyl-tRNA(Gln) + L-glutamate + ADP + phosphate + H(+). Allows the formation of correctly charged Gln-tRNA(Gln) through the transamidation of misacylated Glu-tRNA(Gln) in organisms which lack glutaminyl-tRNA synthetase. The reaction takes place in the presence of glutamine and ATP through an activated gamma-phospho-Glu-tRNA(Gln). The sequence is that of Glutamyl-tRNA(Gln) amidotransferase subunit A from Anaeromyxobacter dehalogenans (strain 2CP-C).